Consider the following 208-residue polypeptide: Fibroblast growth factor 6 (208 aa).

An N-terminal signal peptide occupies residues 1-37; that stretch reads MALGQRLFITMSRGAGRVQGTLQALVFLGVLVGMVVP. Asn-45 carries an N-linked (GlcNAc...) asparagine glycan. Cysteines 90 and 157 form a disulfide.

It belongs to the heparin-binding growth factors family. Interacts with FGFR1, FGFR2 and FGFR4. Affinity between fibroblast growth factors (FGFs) and their receptors is increased by heparan sulfate glycosaminoglycans that function as coreceptors. Embryos, adult muscles and adult testis.

Its subcellular location is the secreted. It is found in the extracellular space. Plays an important role in the regulation of cell proliferation, cell differentiation, angiogenesis and myogenesis, and is required for normal muscle regeneration. The polypeptide is Fibroblast growth factor 6 (Fgf6) (Mus musculus (Mouse)).